Here is a 258-residue protein sequence, read N- to C-terminus: Triosephosphate isomerase (258 aa).

Asn-9–Lys-11 is a binding site for substrate. His-105 functions as the Electrophile in the catalytic mechanism. Catalysis depends on Glu-176, which acts as the Proton acceptor. The substrate site is built by Gly-182 and Ser-214.

Belongs to the triosephosphate isomerase family. Homodimer.

The protein localises to the cytoplasm. The catalysed reaction is D-glyceraldehyde 3-phosphate = dihydroxyacetone phosphate. It functions in the pathway carbohydrate biosynthesis; gluconeogenesis. It participates in carbohydrate degradation; glycolysis; D-glyceraldehyde 3-phosphate from glycerone phosphate: step 1/1. Its function is as follows. Involved in the gluconeogenesis. Catalyzes stereospecifically the conversion of dihydroxyacetone phosphate (DHAP) to D-glyceraldehyde-3-phosphate (G3P). In Mycoplasmopsis agalactiae (strain NCTC 10123 / CIP 59.7 / PG2) (Mycoplasma agalactiae), this protein is Triosephosphate isomerase.